A 524-amino-acid polypeptide reads, in one-letter code: GMP synthase [glutamine-hydrolyzing] (524 aa).

A Glutamine amidotransferase type-1 domain is found at 8–206 (RILILDFGSQ…IYDICGCEAL (199 aa)). The active-site Nucleophile is Cys-85. Catalysis depends on residues His-180 and Glu-182. The 193-residue stretch at 207-399 (WEPRHIIAKS…LGLPFELVYR (193 aa)) folds into the GMPS ATP-PPase domain. 234–240 (SGGVDSS) is an ATP binding site.

In terms of assembly, homodimer.

It catalyses the reaction XMP + L-glutamine + ATP + H2O = GMP + L-glutamate + AMP + diphosphate + 2 H(+). The protein operates within purine metabolism; GMP biosynthesis; GMP from XMP (L-Gln route): step 1/1. Catalyzes the synthesis of GMP from XMP. This chain is GMP synthase [glutamine-hydrolyzing], found in Nitrosococcus oceani (strain ATCC 19707 / BCRC 17464 / JCM 30415 / NCIMB 11848 / C-107).